The sequence spans 209 residues: ATP-dependent Clp protease proteolytic subunit (209 aa).

Ser-106 (nucleophile) is an active-site residue. The active site involves His-131.

The protein belongs to the peptidase S14 family. Fourteen ClpP subunits assemble into 2 heptameric rings which stack back to back to give a disk-like structure with a central cavity, resembling the structure of eukaryotic proteasomes.

Its subcellular location is the cytoplasm. It catalyses the reaction Hydrolysis of proteins to small peptides in the presence of ATP and magnesium. alpha-casein is the usual test substrate. In the absence of ATP, only oligopeptides shorter than five residues are hydrolyzed (such as succinyl-Leu-Tyr-|-NHMec, and Leu-Tyr-Leu-|-Tyr-Trp, in which cleavage of the -Tyr-|-Leu- and -Tyr-|-Trp bonds also occurs).. In terms of biological role, cleaves peptides in various proteins in a process that requires ATP hydrolysis. Has a chymotrypsin-like activity. Plays a major role in the degradation of misfolded proteins. This Caulobacter vibrioides (strain ATCC 19089 / CIP 103742 / CB 15) (Caulobacter crescentus) protein is ATP-dependent Clp protease proteolytic subunit.